The following is a 305-amino-acid chain: Ribosomal RNA small subunit methyltransferase H (305 aa).

Residues 33–35 (GGH), D52, D97, and Q104 contribute to the S-adenosyl-L-methionine site.

The protein belongs to the methyltransferase superfamily. RsmH family.

The protein localises to the cytoplasm. The enzyme catalyses cytidine(1402) in 16S rRNA + S-adenosyl-L-methionine = N(4)-methylcytidine(1402) in 16S rRNA + S-adenosyl-L-homocysteine + H(+). Functionally, specifically methylates the N4 position of cytidine in position 1402 (C1402) of 16S rRNA. This chain is Ribosomal RNA small subunit methyltransferase H, found in Campylobacter lari (strain RM2100 / D67 / ATCC BAA-1060).